Here is an 843-residue protein sequence, read N- to C-terminus: MSLISAVEDRDIHNIGKTSGGGSRTSSITSSKKSLKHGSKSLRKPKVYQTTGELLSREALYKAKLKYGVYQSPAQSYSIGVSDAHAASDKAANLAHDNQTTVEAYKRMFIDPNATKAASKMGPKVVRNNSITSATSKTSKESQTKRKSKESPGAAASKAYSMTMETTSLSSQTNSRSYSITSASSVLSGASGSFNSTVNPKPKTLNLEKVLVGAEKKAESRIKERWEPEKTNFQYGVKTDEHGNLNQFSFSNEMMNNIMAKVDAPKAQDLQKVKKVSAEKEAKSMKFALGAANAVKDMHPGEDIDKSIALKAQKRETYLSQLTSQQVLTLARANVDRQLDIIEKSDMHRKLFTNMEYNKAAVAVAQSNHQKKTEFHNKINMGGGLFLSPEDITKIASGLISPVLGEVSERAEAQRAMDEEIAERTEAYNKSLNEWETMERSIISNDAKVLTTTANRHQTEKKTSQEKIKASFDALVARMDTKVAERETLLEDTKSKEIEFKKQMQQELKDEKARLDQDLEEWGKKCEQDITEARKEQEELLKPYHDDLANAEAEHKTLVEERDEINAEISRLQDAIVDHKRKISGYGNDLDAQKNRNIREDDKLLELGQTKESLESHLNDDVIILANKAKEQAELSTKEARLKQLEVDSLINERKSELNATEIELKKEKLNLLEAMKDVASARGDDKIDEEKVKKLIGMTSEEYLTQNKSVEKNVEDLPTQLEKIEEGDELKKEEIVGAETKNSGGDGVPVSTAAKEATETSSAVQTKEPEEKISIGNKSSGKEDANDCKSAEHSKEISVSQKAGNNKSLGVSPDSLEHTFSGFSQGSSIEDDQDAISNQEKK.

The residue at position 2 (Ser2) is an N-acetylserine. Residue Ser2 is modified to Phosphoserine. Residues 13–44 are disordered; the sequence is HNIGKTSGGGSRTSSITSSKKSLKHGSKSLRK. Positions 33–44 are enriched in basic residues; that stretch reads KSLKHGSKSLRK. Ser88 and Ser130 each carry phosphoserine. Residues 120-174 are disordered; sequence KMGPKVVRNNSITSATSKTSKESQTKRKSKESPGAAASKAYSMTMETTSLSSQTN. 2 stretches are compositionally biased toward polar residues: residues 127–137 and 163–174; these read RNNSITSATSK and TMETTSLSSQTN. 4 positions are modified to phosphoserine: Ser182, Ser401, Ser584, and Ser710. A disordered region spans residues 717–843; that stretch reads DLPTQLEKIE…QDAISNQEKK (127 aa). The residue at position 720 (Thr720) is a Phosphothreonine. A compositionally biased stretch (low complexity) spans 752 to 764; the sequence is STAAKEATETSSA. A phosphoserine mark is found at Ser763 and Ser775. A compositionally biased stretch (basic and acidic residues) spans 781-797; sequence SGKEDANDCKSAEHSKE. Residues 798–810 show a composition bias toward polar residues; that stretch reads ISVSQKAGNNKSL. Phosphoserine occurs at positions 816, 828, 829, and 838.

The protein belongs to the EIS1 family.

The protein localises to the cytoplasmic granule. It is found in the cell membrane. Its function is as follows. Required for normal formation of eisosomes, large cytoplasmic protein assemblies that localize to specialized domains on plasma membrane and mark the site of endocytosis. The polypeptide is Eisosome protein 1 (EIS1) (Saccharomyces cerevisiae (strain RM11-1a) (Baker's yeast)).